The sequence spans 201 residues: Large ribosomal subunit protein uL4 (201 aa).

A disordered region spans residues G42–R67.

Belongs to the universal ribosomal protein uL4 family. As to quaternary structure, part of the 50S ribosomal subunit.

In terms of biological role, one of the primary rRNA binding proteins, this protein initially binds near the 5'-end of the 23S rRNA. It is important during the early stages of 50S assembly. It makes multiple contacts with different domains of the 23S rRNA in the assembled 50S subunit and ribosome. Its function is as follows. Forms part of the polypeptide exit tunnel. The chain is Large ribosomal subunit protein uL4 from Legionella pneumophila (strain Paris).